We begin with the raw amino-acid sequence, 196 residues long: Large ribosomal subunit protein bL17 (196 aa).

The segment at 133–196 (AAKRDADKKE…KPAAEEKDAK (64 aa)) is disordered. Residues 134-143 (AKRDADKKEA) are compositionally biased toward basic and acidic residues. The span at 152–164 (EVAETEAAPEAEA) shows a compositional bias: acidic residues. Residues 184–196 (AAEKPAAEEKDAK) are compositionally biased toward basic and acidic residues.

The protein belongs to the bacterial ribosomal protein bL17 family. As to quaternary structure, part of the 50S ribosomal subunit. Contacts protein L32.

The chain is Large ribosomal subunit protein bL17 from Arthrobacter sp. (strain FB24).